Reading from the N-terminus, the 485-residue chain is MELFELTIHELHDKLKKKEVSSVEATESMLARIEAVEPKVNAFITVTADQALKDAAEADKRIADGDMDKLTGIPVALKDIFLTKGVRTTCASRILENFIPPYDATSVARLKARGAVLVGKLNQDEFAMGSSTESSYFGKTSNPWNLECIPGGSSGGSAAAIAAQQATATLGTDTGGSIRQPASHCGCVGLKPTYGRVSRYGVIAYASSLDQVGPVTRDVTDCAIMLEAVAGYDAKDSTSVDLPVPEYTKALTGQVKGLKIGLPREYFIEGLDPDVQKAMDEAIATYRQMGAEFQEVSLPHTDYAVATYYLVATAEASSNLARYDGARFGHRSHEAQSLLDMYRKSRAEGFGEEVKRRIMLGTYALSSGYYDAYYLKAQKVRTLIMHDFIKAFEQVDVLLTPVAPTPAFRIGEKTSDPLQMYLSDIFTIPVNLAGTCGISVPAGLSRAGLPIGLQLIGKPFGEENILRAAHAFEQNTDWHKRRAAL.

Active-site charge relay system residues include lysine 78 and serine 153. Serine 177 serves as the catalytic Acyl-ester intermediate.

It belongs to the amidase family. GatA subfamily. In terms of assembly, heterotrimer of A, B and C subunits.

The enzyme catalyses L-glutamyl-tRNA(Gln) + L-glutamine + ATP + H2O = L-glutaminyl-tRNA(Gln) + L-glutamate + ADP + phosphate + H(+). In terms of biological role, allows the formation of correctly charged Gln-tRNA(Gln) through the transamidation of misacylated Glu-tRNA(Gln) in organisms which lack glutaminyl-tRNA synthetase. The reaction takes place in the presence of glutamine and ATP through an activated gamma-phospho-Glu-tRNA(Gln). The sequence is that of Glutamyl-tRNA(Gln) amidotransferase subunit A from Geotalea daltonii (strain DSM 22248 / JCM 15807 / FRC-32) (Geobacter daltonii).